The chain runs to 564 residues: Dihydroxy-acid dehydratase (564 aa).

Asp-80 provides a ligand contact to Mg(2+). Cys-121 lines the [2Fe-2S] cluster pocket. 2 residues coordinate Mg(2+): Asp-122 and Lys-123. N6-carboxylysine is present on Lys-123. Position 194 (Cys-194) interacts with [2Fe-2S] cluster. Glu-447 contributes to the Mg(2+) binding site. Residue Ser-473 is the Proton acceptor of the active site.

It belongs to the IlvD/Edd family. As to quaternary structure, homodimer. [2Fe-2S] cluster is required as a cofactor. It depends on Mg(2+) as a cofactor.

It catalyses the reaction (2R)-2,3-dihydroxy-3-methylbutanoate = 3-methyl-2-oxobutanoate + H2O. The catalysed reaction is (2R,3R)-2,3-dihydroxy-3-methylpentanoate = (S)-3-methyl-2-oxopentanoate + H2O. Its pathway is amino-acid biosynthesis; L-isoleucine biosynthesis; L-isoleucine from 2-oxobutanoate: step 3/4. It participates in amino-acid biosynthesis; L-valine biosynthesis; L-valine from pyruvate: step 3/4. Its function is as follows. Functions in the biosynthesis of branched-chain amino acids. Catalyzes the dehydration of (2R,3R)-2,3-dihydroxy-3-methylpentanoate (2,3-dihydroxy-3-methylvalerate) into 2-oxo-3-methylpentanoate (2-oxo-3-methylvalerate) and of (2R)-2,3-dihydroxy-3-methylbutanoate (2,3-dihydroxyisovalerate) into 2-oxo-3-methylbutanoate (2-oxoisovalerate), the penultimate precursor to L-isoleucine and L-valine, respectively. The chain is Dihydroxy-acid dehydratase from Listeria welshimeri serovar 6b (strain ATCC 35897 / DSM 20650 / CCUG 15529 / CIP 8149 / NCTC 11857 / SLCC 5334 / V8).